The sequence spans 458 residues: Bifunctional protein GlmU (458 aa).

The interval 1-229 is pyrophosphorylase; it reads MNKFAIVLAA…FDESLGVNDR (229 aa). UDP-N-acetyl-alpha-D-glucosamine-binding positions include 8 to 11, lysine 22, glutamine 72, and 77 to 78; these read LAAG and GT. Aspartate 102 is a binding site for Mg(2+). UDP-N-acetyl-alpha-D-glucosamine is bound by residues glycine 139, glutamate 154, asparagine 169, and asparagine 227. Residue asparagine 227 coordinates Mg(2+). The tract at residues 230 to 250 is linker; that stretch reads VALSQAEGTMRKRINHEHMVN. An N-acetyltransferase region spans residues 251–458; it reads GVTLIDPATT…AKKMPHYRGQ (208 aa). The UDP-N-acetyl-alpha-D-glucosamine site is built by arginine 332 and lysine 350. Catalysis depends on histidine 362, which acts as the Proton acceptor. The UDP-N-acetyl-alpha-D-glucosamine site is built by tyrosine 365 and asparagine 376. Acetyl-CoA contacts are provided by alanine 379, serine 404, alanine 422, and arginine 439.

This sequence in the N-terminal section; belongs to the N-acetylglucosamine-1-phosphate uridyltransferase family. In the C-terminal section; belongs to the transferase hexapeptide repeat family. As to quaternary structure, homotrimer. Mg(2+) is required as a cofactor.

Its subcellular location is the cytoplasm. The catalysed reaction is alpha-D-glucosamine 1-phosphate + acetyl-CoA = N-acetyl-alpha-D-glucosamine 1-phosphate + CoA + H(+). It carries out the reaction N-acetyl-alpha-D-glucosamine 1-phosphate + UTP + H(+) = UDP-N-acetyl-alpha-D-glucosamine + diphosphate. It functions in the pathway nucleotide-sugar biosynthesis; UDP-N-acetyl-alpha-D-glucosamine biosynthesis; N-acetyl-alpha-D-glucosamine 1-phosphate from alpha-D-glucosamine 6-phosphate (route II): step 2/2. Its pathway is nucleotide-sugar biosynthesis; UDP-N-acetyl-alpha-D-glucosamine biosynthesis; UDP-N-acetyl-alpha-D-glucosamine from N-acetyl-alpha-D-glucosamine 1-phosphate: step 1/1. The protein operates within bacterial outer membrane biogenesis; LPS lipid A biosynthesis. In terms of biological role, catalyzes the last two sequential reactions in the de novo biosynthetic pathway for UDP-N-acetylglucosamine (UDP-GlcNAc). The C-terminal domain catalyzes the transfer of acetyl group from acetyl coenzyme A to glucosamine-1-phosphate (GlcN-1-P) to produce N-acetylglucosamine-1-phosphate (GlcNAc-1-P), which is converted into UDP-GlcNAc by the transfer of uridine 5-monophosphate (from uridine 5-triphosphate), a reaction catalyzed by the N-terminal domain. The sequence is that of Bifunctional protein GlmU from Lactococcus lactis subsp. cremoris (strain SK11).